The following is a 71-amino-acid chain: Large ribosomal subunit protein uL29 (71 aa).

This sequence belongs to the universal ribosomal protein uL29 family.

The chain is Large ribosomal subunit protein uL29 from Rickettsia massiliae (strain Mtu5).